Consider the following 154-residue polypeptide: Myoglobin (154 aa).

The region spanning 2 to 148 (GLSDGEWELV…FRNDIAAKYK (147 aa)) is the Globin domain. At serine 4 the chain carries Phosphoserine. Threonine 68 carries the post-translational modification Phosphothreonine. Heme b is bound at residue histidine 94.

This sequence belongs to the globin family. In terms of assembly, monomeric.

Its subcellular location is the cytoplasm. The protein resides in the sarcoplasm. The enzyme catalyses Fe(III)-heme b-[protein] + nitric oxide + H2O = Fe(II)-heme b-[protein] + nitrite + 2 H(+). It carries out the reaction H2O2 + AH2 = A + 2 H2O. In terms of biological role, monomeric heme protein which primary function is to store oxygen and facilitate its diffusion within muscle tissues. Reversibly binds oxygen through a pentacoordinated heme iron and enables its timely and efficient release as needed during periods of heightened demand. Depending on the oxidative conditions of tissues and cells, and in addition to its ability to bind oxygen, it also has a nitrite reductase activity whereby it regulates the production of bioactive nitric oxide. Under stress conditions, like hypoxia and anoxia, it also protects cells against reactive oxygen species thanks to its pseudoperoxidase activity. The sequence is that of Myoglobin (MB) from Elephas maximus (Indian elephant).